Consider the following 522-residue polypeptide: Nif-specific regulatory protein (522 aa).

The a domain stretch occupies residues 1 to 184 (MNATIPQRSA…AQTVRLVVNI (184 aa)). Residues 37–178 (QIDELLEQVL…IVANLLAQTV (142 aa)) enclose the GAF domain. In terms of domain architecture, Sigma-54 factor interaction spans 211 to 439 (VVGHTPTMRR…LENCLERSAI (229 aa)). ATP is bound by residues 239–246 (GESGTGKE) and 302–311 (ADGGTLFLDE). An inter-domain linker region spans residues 440-479 (MSEDGTITRDVVSLTGVDNESPPLAAPLPEVNLADETLDD). The segment at 480–522 (RERVIAALEQAGWVQAKAARLLGMTPRQIAYRIQTLNIHMRKI) is C-terminal DNA-binding domain. A DNA-binding region (H-T-H motif) is located at residues 494-513 (QAKAARLLGMTPRQIAYRIQ).

In terms of assembly, interacts with sigma-54.

In terms of biological role, required for activation of most nif operons, which are directly involved in nitrogen fixation. In Azotobacter vinelandii, this protein is Nif-specific regulatory protein (nifA).